The primary structure comprises 370 residues: Glutamine synthetase (370 aa).

The GS beta-grasp domain maps to 23-102 (VLAEYVWIDA…VLTECWNNDG (80 aa)). Residues 40–69 (CKTLDKKPSSVEDLPEWNFDGSSTGQAPGH) are disordered. The GS catalytic domain maps to 109 to 370 (HRHESAKLMK…FKEYARESSD (262 aa)).

It belongs to the glutamine synthetase family. As to quaternary structure, homooctamer.

The protein localises to the cytoplasm. It catalyses the reaction L-glutamate + NH4(+) + ATP = L-glutamine + ADP + phosphate + H(+). The sequence is that of Glutamine synthetase (GLN1) from Debaryomyces hansenii (strain ATCC 36239 / CBS 767 / BCRC 21394 / JCM 1990 / NBRC 0083 / IGC 2968) (Yeast).